A 308-amino-acid chain; its full sequence is Glutaminase (308 aa).

The substrate site is built by Ser-66, Asn-117, Glu-161, Asn-168, Tyr-192, Tyr-244, and Val-262.

It belongs to the glutaminase family. Homotetramer.

It carries out the reaction L-glutamine + H2O = L-glutamate + NH4(+). The sequence is that of Glutaminase from Salmonella arizonae (strain ATCC BAA-731 / CDC346-86 / RSK2980).